We begin with the raw amino-acid sequence, 312 residues long: tRNA dimethylallyltransferase (312 aa).

Position 14–21 (14–21 (GPTASGKS)) interacts with ATP. 16–21 (TASGKS) contributes to the substrate binding site. 2 interaction with substrate tRNA regions span residues 39-42 (DSSL) and 163-167 (QRLQR).

It belongs to the IPP transferase family. In terms of assembly, monomer. The cofactor is Mg(2+).

The catalysed reaction is adenosine(37) in tRNA + dimethylallyl diphosphate = N(6)-dimethylallyladenosine(37) in tRNA + diphosphate. Functionally, catalyzes the transfer of a dimethylallyl group onto the adenine at position 37 in tRNAs that read codons beginning with uridine, leading to the formation of N6-(dimethylallyl)adenosine (i(6)A). This chain is tRNA dimethylallyltransferase, found in Methylococcus capsulatus (strain ATCC 33009 / NCIMB 11132 / Bath).